A 216-amino-acid chain; its full sequence is Phosphatidylserine decarboxylase proenzyme (216 aa).

S183 functions as the Schiff-base intermediate with substrate; via pyruvic acid in the catalytic mechanism. S183 is modified (pyruvic acid (Ser); by autocatalysis).

This sequence belongs to the phosphatidylserine decarboxylase family. PSD-A subfamily. Heterodimer of a large membrane-associated beta subunit and a small pyruvoyl-containing alpha subunit. Pyruvate is required as a cofactor. Is synthesized initially as an inactive proenzyme. Formation of the active enzyme involves a self-maturation process in which the active site pyruvoyl group is generated from an internal serine residue via an autocatalytic post-translational modification. Two non-identical subunits are generated from the proenzyme in this reaction, and the pyruvate is formed at the N-terminus of the alpha chain, which is derived from the carboxyl end of the proenzyme. The post-translation cleavage follows an unusual pathway, termed non-hydrolytic serinolysis, in which the side chain hydroxyl group of the serine supplies its oxygen atom to form the C-terminus of the beta chain, while the remainder of the serine residue undergoes an oxidative deamination to produce ammonia and the pyruvoyl prosthetic group on the alpha chain.

It localises to the cell membrane. The catalysed reaction is a 1,2-diacyl-sn-glycero-3-phospho-L-serine + H(+) = a 1,2-diacyl-sn-glycero-3-phosphoethanolamine + CO2. It functions in the pathway phospholipid metabolism; phosphatidylethanolamine biosynthesis; phosphatidylethanolamine from CDP-diacylglycerol: step 2/2. Catalyzes the formation of phosphatidylethanolamine (PtdEtn) from phosphatidylserine (PtdSer). This is Phosphatidylserine decarboxylase proenzyme from Chlorobaculum tepidum (strain ATCC 49652 / DSM 12025 / NBRC 103806 / TLS) (Chlorobium tepidum).